The primary structure comprises 344 residues: Lipase chaperone (344 aa).

Residues 14 to 34 (AAIYGVVGLAAIAGVAMWSGA) traverse the membrane as a helical segment.

It belongs to the lipase chaperone family.

It is found in the cell inner membrane. In terms of biological role, may be involved in the folding of the extracellular lipase during its passage through the periplasm. The chain is Lipase chaperone from Burkholderia cenocepacia (strain HI2424).